A 289-amino-acid polypeptide reads, in one-letter code: NFU1 iron-sulfur cluster scaffold homolog, mitochondrial (289 aa).

The N-terminal 56 residues, methionine 1–threonine 56, are a transit peptide targeting the mitochondrion. A nifU region spans residues isoleucine 183–valine 251. [4Fe-4S] cluster-binding residues include cysteine 220 and cysteine 223. Residues glutamate 267–asparagine 289 form a disordered region.

Belongs to the NifU family.

The protein resides in the mitochondrion. Molecular scaffold for [Fe-S] cluster assembly of mitochondrial iron-sulfur proteins. This Drosophila willistoni (Fruit fly) protein is NFU1 iron-sulfur cluster scaffold homolog, mitochondrial.